The sequence spans 66 residues: Large ribosomal subunit protein bL33 (66 aa).

This sequence belongs to the bacterial ribosomal protein bL33 family.

In Prochlorococcus marinus (strain MIT 9303), this protein is Large ribosomal subunit protein bL33.